The primary structure comprises 927 residues: Autophagy-related protein 13 (927 aa).

Disordered stretches follow at residues 1-66 (MHQQ…PPAD), 334-359 (SLPQQHATSRAPAAEAGSLRDHRSKP), 388-559 (LRSV…AQPG), 628-716 (TESM…TIRE), and 786-927 (QMQL…RRGW). Over residues 14 to 30 (PGATTQPNLPSRSNSTR) the composition is skewed to polar residues. Polar residues-rich tracts occupy residues 393–402 (QPGSDTSSPP), 513–523 (PASTSRYSSSF), and 544–557 (GSSGRQSLASSVAQ). A compositionally biased stretch (low complexity) spans 630 to 671 (SMTSSVQMQRSSSSSSRQLTSVPGMTAPASVSASSSPGKPLS). Positions 684–716 (LSENSIIDYSGQGRITSRQGRTSDNTQPGTIRE) are enriched in polar residues. The segment covering 793 to 803 (STQRPSDRLEP) has biased composition (basic and acidic residues). Residues 850–868 (HKQTPPQSSRGSFNGSLNR) are compositionally biased toward polar residues. Residues 891-901 (PQGRRSIEEAR) are compositionally biased toward basic and acidic residues.

It belongs to the ATG13 family. Fungi subfamily. In terms of assembly, hypophosphorylated form interacts with ATG1 to form the ATG1-ATG13 kinase complex. The ATG1-ATG13 complex interacts with the ATG17-ATG29-ATG31 complex through direct interaction with ATG17.

The protein localises to the cytoplasm. It localises to the preautophagosomal structure. Functionally, activates the ATG1 kinase in a nutritional condition dependent manner through the TOR pathway, leading to autophagy. Involved in ATG9 and ATG23 cycling through the pre-autophagosomal structure. Also involved in cytoplasm to vacuole transport (Cvt) and more specifically in Cvt vesicle formation. Seems to play a role in the switching machinery regulating the conversion between the Cvt pathway and autophagy. Finally, ATG13 is also required for glycogen storage during stationary phase. Autophagy is required for proper vegetative growth, asexual/sexual reproduction, and full virulence. Autophagy is particularly involved in the biosynthesis of deoxynivalenol (DON), an important virulence determinant. The polypeptide is Autophagy-related protein 13 (Gibberella zeae (strain ATCC MYA-4620 / CBS 123657 / FGSC 9075 / NRRL 31084 / PH-1) (Wheat head blight fungus)).